Reading from the N-terminus, the 424-residue chain is Serine--tRNA ligase (424 aa).

Thr-231 to Glu-233 provides a ligand contact to L-serine. Arg-262–Glu-264 is an ATP binding site. Residue Glu-285 participates in L-serine binding. An ATP-binding site is contributed by Glu-349–Ser-352. Ser-385 is an L-serine binding site.

Belongs to the class-II aminoacyl-tRNA synthetase family. Type-1 seryl-tRNA synthetase subfamily. As to quaternary structure, homodimer. The tRNA molecule binds across the dimer.

Its subcellular location is the cytoplasm. The enzyme catalyses tRNA(Ser) + L-serine + ATP = L-seryl-tRNA(Ser) + AMP + diphosphate + H(+). It catalyses the reaction tRNA(Sec) + L-serine + ATP = L-seryl-tRNA(Sec) + AMP + diphosphate + H(+). The protein operates within aminoacyl-tRNA biosynthesis; selenocysteinyl-tRNA(Sec) biosynthesis; L-seryl-tRNA(Sec) from L-serine and tRNA(Sec): step 1/1. Catalyzes the attachment of serine to tRNA(Ser). Is also able to aminoacylate tRNA(Sec) with serine, to form the misacylated tRNA L-seryl-tRNA(Sec), which will be further converted into selenocysteinyl-tRNA(Sec). In Bacillus cereus (strain B4264), this protein is Serine--tRNA ligase.